The sequence spans 345 residues: Holliday junction branch migration complex subunit RuvB (345 aa).

The segment at 1–22 (MIETDALSGGTPRRLVTQQPLS) is disordered. Residues 4-193 (TDALSGGTPR…FGIVARLEFY (190 aa)) form a large ATPase domain (RuvB-L) region. Residues L32, R33, G74, K77, T78, T79, 140-142 (EDY), R183, Y193, and R230 contribute to the ATP site. Residue T78 participates in Mg(2+) binding. Positions 194–264 (TPEELTRIVR…VADAALSMLD (71 aa)) are small ATPAse domain (RuvB-S). A head domain (RuvB-H) region spans residues 267–345 (PAGLDVMDRK…HFGFVPPERV (79 aa)). Residues R322 and R327 each coordinate DNA.

It belongs to the RuvB family. In terms of assembly, homohexamer. Forms an RuvA(8)-RuvB(12)-Holliday junction (HJ) complex. HJ DNA is sandwiched between 2 RuvA tetramers; dsDNA enters through RuvA and exits via RuvB. An RuvB hexamer assembles on each DNA strand where it exits the tetramer. Each RuvB hexamer is contacted by two RuvA subunits (via domain III) on 2 adjacent RuvB subunits; this complex drives branch migration. In the full resolvosome a probable DNA-RuvA(4)-RuvB(12)-RuvC(2) complex forms which resolves the HJ.

It is found in the cytoplasm. It catalyses the reaction ATP + H2O = ADP + phosphate + H(+). In terms of biological role, the RuvA-RuvB-RuvC complex processes Holliday junction (HJ) DNA during genetic recombination and DNA repair, while the RuvA-RuvB complex plays an important role in the rescue of blocked DNA replication forks via replication fork reversal (RFR). RuvA specifically binds to HJ cruciform DNA, conferring on it an open structure. The RuvB hexamer acts as an ATP-dependent pump, pulling dsDNA into and through the RuvAB complex. RuvB forms 2 homohexamers on either side of HJ DNA bound by 1 or 2 RuvA tetramers; 4 subunits per hexamer contact DNA at a time. Coordinated motions by a converter formed by DNA-disengaged RuvB subunits stimulates ATP hydrolysis and nucleotide exchange. Immobilization of the converter enables RuvB to convert the ATP-contained energy into a lever motion, pulling 2 nucleotides of DNA out of the RuvA tetramer per ATP hydrolyzed, thus driving DNA branch migration. The RuvB motors rotate together with the DNA substrate, which together with the progressing nucleotide cycle form the mechanistic basis for DNA recombination by continuous HJ branch migration. Branch migration allows RuvC to scan DNA until it finds its consensus sequence, where it cleaves and resolves cruciform DNA. The protein is Holliday junction branch migration complex subunit RuvB of Laribacter hongkongensis (strain HLHK9).